Consider the following 143-residue polypeptide: Transcriptional regulator MraZ (143 aa).

2 consecutive SpoVT-AbrB domains span residues 5–47 (EYHH…PIEE) and 76–119 (AMES…SAER).

It belongs to the MraZ family. Forms oligomers.

The protein localises to the cytoplasm. Its subcellular location is the nucleoid. The polypeptide is Transcriptional regulator MraZ (Lactobacillus gasseri (strain ATCC 33323 / DSM 20243 / BCRC 14619 / CIP 102991 / JCM 1131 / KCTC 3163 / NCIMB 11718 / NCTC 13722 / AM63)).